We begin with the raw amino-acid sequence, 618 residues long: Probable Xaa-Pro aminopeptidase P (618 aa).

Residues D415, D426, E524, and E538 each coordinate Mn(2+).

It belongs to the peptidase M24B family. It depends on Mn(2+) as a cofactor.

The enzyme catalyses Release of any N-terminal amino acid, including proline, that is linked to proline, even from a dipeptide or tripeptide.. Functionally, catalyzes the removal of a penultimate prolyl residue from the N-termini of peptides. The protein is Probable Xaa-Pro aminopeptidase P (AMPP) of Pyricularia oryzae (strain 70-15 / ATCC MYA-4617 / FGSC 8958) (Rice blast fungus).